Reading from the N-terminus, the 68-residue chain is Conotoxin Mi11.1 (68 aa).

Residues 1 to 26 form the signal peptide; it reads MMLRLTSVSCFLLVIACLNLFQVVLT. 4 cysteine pairs are disulfide-bonded: Cys-29–Cys-43, Cys-36–Cys-48, Cys-42–Cys-52, and Cys-47–Cys-56. Tyrosine amide is present on Tyr-60. Residues 64-68 constitute a propeptide that is removed on maturation; the sequence is ATFQE.

The protein belongs to the conotoxin I2 superfamily. In terms of tissue distribution, expressed by the venom duct.

Its subcellular location is the secreted. In Conus miles (Soldier cone), this protein is Conotoxin Mi11.1.